The sequence spans 204 residues: Signal peptidase I (204 aa).

Residues 1–10 are Cytoplasmic-facing; that stretch reads MNLFKNFLKE. Residues 11 to 30 traverse the membrane as a helical segment; sequence WGLFLLILSLLALSRIFFWS. Over 31 to 204 the chain is Extracellular; that stretch reads NVRVEGHSMD…FWPITRIGTF (174 aa). Active-site residues include Ser-38 and Lys-76.

It belongs to the peptidase S26 family.

It localises to the cell membrane. It carries out the reaction Cleavage of hydrophobic, N-terminal signal or leader sequences from secreted and periplasmic proteins.. The sequence is that of Signal peptidase I (lepB) from Streptococcus pneumoniae (strain ATCC BAA-255 / R6).